Consider the following 637-residue polypeptide: Threonine--tRNA ligase (637 aa).

Residues 1–61 (MIKITLKDGK…NEDSTLEILT (61 aa)) form the TGS domain. Positions 242 to 532 (DHRKLGKELG…LTEHYAGAFP (291 aa)) are catalytic. Positions 333, 384, and 509 each coordinate Zn(2+).

This sequence belongs to the class-II aminoacyl-tRNA synthetase family. As to quaternary structure, homodimer. It depends on Zn(2+) as a cofactor.

Its subcellular location is the cytoplasm. It catalyses the reaction tRNA(Thr) + L-threonine + ATP = L-threonyl-tRNA(Thr) + AMP + diphosphate + H(+). Functionally, catalyzes the attachment of threonine to tRNA(Thr) in a two-step reaction: L-threonine is first activated by ATP to form Thr-AMP and then transferred to the acceptor end of tRNA(Thr). Also edits incorrectly charged L-seryl-tRNA(Thr). This Clostridium novyi (strain NT) protein is Threonine--tRNA ligase.